Here is a 130-residue protein sequence, read N- to C-terminus: Fluoride-specific ion channel FluC (130 aa).

4 consecutive transmembrane segments (helical) span residues 3 to 23, 38 to 58, 67 to 87, and 102 to 122; these read FVFLWAALGGAIGSSLRYFVG, LGTFSVNIIGCFVIGFMGHLA, FGIFFVTGVLGGFTTFSSYGL, and ISYVLGTNLLGLIGVAIGWFL. The Na(+) site is built by glycine 77 and threonine 80.

The protein belongs to the fluoride channel Fluc/FEX (TC 1.A.43) family.

The protein resides in the cell inner membrane. It carries out the reaction fluoride(in) = fluoride(out). Na(+) is not transported, but it plays an essential structural role and its presence is essential for fluoride channel function. In terms of biological role, fluoride-specific ion channel. Important for reducing fluoride concentration in the cell, thus reducing its toxicity. The sequence is that of Fluoride-specific ion channel FluC from Helicobacter pylori (strain G27).